The chain runs to 608 residues: Ceramide kinase (608 aa).

Residues 160–367 (ERPRNLLVFV…LDAMQVVRWK (208 aa)) form the DAGKc domain. ATP-binding positions include 170–174 (HPKSG), T201, and 230–236 (GDGFFNE). 229–232 (GGDG) is a binding site for substrate. D231 acts as the Proton donor/acceptor in catalysis. The segment at 254–280 (PSDSFNSVQSRGSSSVPEPGDEVHETD) is disordered. Residues 255–269 (SDSFNSVQSRGSSSV) are compositionally biased toward polar residues. S329 contributes to the ATP binding site.

It depends on Ca(2+) as a cofactor.

The enzyme catalyses an N-acylsphing-4-enine + ATP = an N-acylsphing-4-enine 1-phosphate + ADP + H(+). Its function is as follows. Catalyzes specifically the phosphorylation of ceramide to form ceramide 1-phosphate. Possesses high activity on ceramide analogs (C6, C8 synthetic ceramides) and lower activity on C6 and C8 dihydroceramides. Has weak activity on natural ceramides (a mixture of ceramides from bovine brain) and the synthetic substrate C2 ceramide. Has very poor activity on diacylglycerol and sphingosine. Ceramide is a critical sphingolipid metabolite that induces programmed cell death (PCD) in plants and ceramide-1-phosphate has a PCD suppressive effect. Thus, ceramide phosphorylation plays a role in the modulation of PCD and CERK activity is crucial for the maintenance of cell viability. This is Ceramide kinase (CERK) from Arabidopsis thaliana (Mouse-ear cress).